Here is a 231-residue protein sequence, read N- to C-terminus: UPF0173 metal-dependent hydrolase AF_1265 (231 aa).

Belongs to the UPF0173 family.

The protein is UPF0173 metal-dependent hydrolase AF_1265 of Archaeoglobus fulgidus (strain ATCC 49558 / DSM 4304 / JCM 9628 / NBRC 100126 / VC-16).